The following is a 391-amino-acid chain: Phosphoglycerate kinase (391 aa).

Substrate contacts are provided by residues 21-23 (DLN), Arg-36, 59-62 (HLGR), Arg-113, and Arg-146. ATP is bound by residues Lys-197, Glu-319, and 345–348 (GGDT).

This sequence belongs to the phosphoglycerate kinase family. In terms of assembly, monomer.

The protein localises to the cytoplasm. It carries out the reaction (2R)-3-phosphoglycerate + ATP = (2R)-3-phospho-glyceroyl phosphate + ADP. Its pathway is carbohydrate degradation; glycolysis; pyruvate from D-glyceraldehyde 3-phosphate: step 2/5. The chain is Phosphoglycerate kinase from Xanthomonas oryzae pv. oryzae (strain PXO99A).